The primary structure comprises 250 residues: ATP synthase subunit a (250 aa).

6 helical membrane-spanning segments follow: residues 29–49, 84–104, 114–134, 143–163, 189–209, and 216–236; these read ASLF…FATS, FFPM…LGMM, IVVT…YGFY, LFVP…IEVI, VFAG…GGAL, and VALT…FAVL.

The protein belongs to the ATPase A chain family. As to quaternary structure, F-type ATPases have 2 components, CF(1) - the catalytic core - and CF(0) - the membrane proton channel. CF(1) has five subunits: alpha(3), beta(3), gamma(1), delta(1), epsilon(1). CF(0) has three main subunits: a(1), b(2) and c(9-12). The alpha and beta chains form an alternating ring which encloses part of the gamma chain. CF(1) is attached to CF(0) by a central stalk formed by the gamma and epsilon chains, while a peripheral stalk is formed by the delta and b chains.

It localises to the cell inner membrane. In terms of biological role, key component of the proton channel; it plays a direct role in the translocation of protons across the membrane. This is ATP synthase subunit a from Allorhizobium ampelinum (strain ATCC BAA-846 / DSM 112012 / S4) (Agrobacterium vitis (strain S4)).